Reading from the N-terminus, the 37-residue chain is Cytochrome b6-f complex subunit 5 (37 aa).

Residues 5 to 25 form a helical membrane-spanning segment; the sequence is LLSGIVLGLIPITLLGLFVTA.

This sequence belongs to the PetG family. The 4 large subunits of the cytochrome b6-f complex are cytochrome b6, subunit IV (17 kDa polypeptide, PetD), cytochrome f and the Rieske protein, while the 4 small subunits are PetG, PetL, PetM and PetN. The complex functions as a dimer.

The protein resides in the plastid. It is found in the chloroplast thylakoid membrane. Component of the cytochrome b6-f complex, which mediates electron transfer between photosystem II (PSII) and photosystem I (PSI), cyclic electron flow around PSI, and state transitions. PetG is required for either the stability or assembly of the cytochrome b6-f complex. The protein is Cytochrome b6-f complex subunit 5 of Marchantia polymorpha (Common liverwort).